Here is a 266-residue protein sequence, read N- to C-terminus: L-aspartate dehydrogenase (266 aa).

Residues A123 and N189 each coordinate NAD(+). The active site involves H219.

It belongs to the L-aspartate dehydrogenase family.

The catalysed reaction is L-aspartate + NADP(+) + H2O = oxaloacetate + NH4(+) + NADPH + H(+). It carries out the reaction L-aspartate + NAD(+) + H2O = oxaloacetate + NH4(+) + NADH + H(+). It functions in the pathway cofactor biosynthesis; NAD(+) biosynthesis; iminoaspartate from L-aspartate (dehydrogenase route): step 1/1. Its function is as follows. Specifically catalyzes the NAD or NADP-dependent dehydrogenation of L-aspartate to iminoaspartate. The chain is L-aspartate dehydrogenase from Cupriavidus taiwanensis (strain DSM 17343 / BCRC 17206 / CCUG 44338 / CIP 107171 / LMG 19424 / R1) (Ralstonia taiwanensis (strain LMG 19424)).